Consider the following 175-residue polypeptide: CDP-archaeol synthase (175 aa).

4 consecutive transmembrane segments (helical) span residues 41-61 (GLFS…WLSM), 78-98 (YASA…GDMF), 122-142 (FVVG…VSNF), and 150-170 (VLIM…FIGV).

The protein belongs to the CDP-archaeol synthase family. The cofactor is Mg(2+).

The protein localises to the cell membrane. It carries out the reaction 2,3-bis-O-(geranylgeranyl)-sn-glycerol 1-phosphate + CTP + H(+) = CDP-2,3-bis-O-(geranylgeranyl)-sn-glycerol + diphosphate. It functions in the pathway membrane lipid metabolism; glycerophospholipid metabolism. Catalyzes the formation of CDP-2,3-bis-(O-geranylgeranyl)-sn-glycerol (CDP-archaeol) from 2,3-bis-(O-geranylgeranyl)-sn-glycerol 1-phosphate (DGGGP) and CTP. This reaction is the third ether-bond-formation step in the biosynthesis of archaeal membrane lipids. The sequence is that of CDP-archaeol synthase from Methanosarcina acetivorans (strain ATCC 35395 / DSM 2834 / JCM 12185 / C2A).